The primary structure comprises 203 residues: Imidazoleglycerol-phosphate dehydratase (203 aa).

This sequence belongs to the imidazoleglycerol-phosphate dehydratase family.

It localises to the cytoplasm. The catalysed reaction is D-erythro-1-(imidazol-4-yl)glycerol 3-phosphate = 3-(imidazol-4-yl)-2-oxopropyl phosphate + H2O. It functions in the pathway amino-acid biosynthesis; L-histidine biosynthesis; L-histidine from 5-phospho-alpha-D-ribose 1-diphosphate: step 6/9. The chain is Imidazoleglycerol-phosphate dehydratase from Helicobacter hepaticus (strain ATCC 51449 / 3B1).